The following is a 334-amino-acid chain: E3 ubiquitin-protein ligase CIP8 (334 aa).

Residues 111–158 (LNSRNEIDDDEDEDEDDGDEEEEDEEENLTVNDEEDEEDDLRRRNRFP) are disordered. Acidic residues predominate over residues 117–149 (IDDDEDEDEDDGDEEEEDEEENLTVNDEEDEED). The segment at 257-298 (CAVCKDGMVMGETGKKLPCGHCYHGDCIVPWLGTRNSCPVCR) adopts an RING-type; atypical zinc-finger fold. The interval 307-334 (EYEEERKKRTSTVSDSAAASSSSSTSRY) is disordered. Residues 317 to 334 (STVSDSAAASSSSSTSRY) are compositionally biased toward low complexity.

In terms of assembly, interacts with the RING finger of COP1. Interacts with UBC8 through its N-terminal region. Expressed in both light- and dark-grown seedlings.

It localises to the cytoplasm. The catalysed reaction is S-ubiquitinyl-[E2 ubiquitin-conjugating enzyme]-L-cysteine + [acceptor protein]-L-lysine = [E2 ubiquitin-conjugating enzyme]-L-cysteine + N(6)-ubiquitinyl-[acceptor protein]-L-lysine.. Its pathway is protein modification; protein ubiquitination. Its function is as follows. E3 ubiquitin-protein ligase that mediates ubiquitination and subsequent proteasomal degradation of target proteins. Probably forms a minimal ubiquitin ligase complex in cooperation with the E2 enzyme UBC8. Its interaction with COP1 suggests that it may participate in proteasome-mediated degradation of HY5 in vivo. The chain is E3 ubiquitin-protein ligase CIP8 (CIP8) from Arabidopsis thaliana (Mouse-ear cress).